The chain runs to 458 residues: DNA repair protein RadA (458 aa).

The segment at 11-28 (CNDCGAEFSRWQGQCSAC) adopts a C4-type zinc-finger fold. 100–107 (GHPGAGKS) provides a ligand contact to ATP. The short motif at 256-260 (KNRFG) is the RadA KNRFG motif element. A lon-protease-like region spans residues 355 to 458 (DVFVNVVGGV…TDALAVLDNL (104 aa)).

This sequence belongs to the RecA family. RadA subfamily.

DNA-dependent ATPase involved in processing of recombination intermediates, plays a role in repairing DNA breaks. Stimulates the branch migration of RecA-mediated strand transfer reactions, allowing the 3' invading strand to extend heteroduplex DNA faster. Binds ssDNA in the presence of ADP but not other nucleotides, has ATPase activity that is stimulated by ssDNA and various branched DNA structures, but inhibited by SSB. Does not have RecA's homology-searching function. This chain is DNA repair protein RadA, found in Haemophilus influenzae (strain ATCC 51907 / DSM 11121 / KW20 / Rd).